We begin with the raw amino-acid sequence, 397 residues long: Homocysteine-responsive endoplasmic reticulum-resident ubiquitin-like domain member 2 protein (397 aa).

The Ubiquitin-like domain occupies 10-89 (VTLVIKAPNQ…HMVHLVCASR (80 aa)). 2 disordered regions span residues 87–166 (ASRS…MQGG) and 210–246 (APSPSLSAGPATQPVQPNEPAAPMGPNPAPEDRPANP). 2 stretches are compositionally biased toward low complexity: residues 88-123 (SRSPPSSPTSDSHFSTTDSSSSTSDSAGPSLSSTPS) and 210-220 (APSPSLSAGPA). The chain crosses the membrane as a helical span at residues 293 to 313 (FVMVIGAMLLVYLHQAGWFPF). The disordered stretch occupies residues 344–373 (DEGIEDDEGDSGEEGPDDPMNPGPHQPGFL). The span at 345 to 360 (EGIEDDEGDSGEEGPD) shows a compositional bias: acidic residues.

It is found in the membrane. In terms of biological role, could be involved in the unfolded protein response (UPR) pathway. The sequence is that of Homocysteine-responsive endoplasmic reticulum-resident ubiquitin-like domain member 2 protein (herpud2) from Danio rerio (Zebrafish).